Consider the following 77-residue polypeptide: Acyl carrier protein (77 aa).

The Carrier domain occupies methionine 1–glutamate 76. Residue serine 36 is modified to O-(pantetheine 4'-phosphoryl)serine.

This sequence belongs to the acyl carrier protein (ACP) family. In terms of processing, 4'-phosphopantetheine is transferred from CoA to a specific serine of apo-ACP by AcpS. This modification is essential for activity because fatty acids are bound in thioester linkage to the sulfhydryl of the prosthetic group.

The protein localises to the cytoplasm. It functions in the pathway lipid metabolism; fatty acid biosynthesis. In terms of biological role, carrier of the growing fatty acid chain in fatty acid biosynthesis. The sequence is that of Acyl carrier protein from Staphylococcus carnosus (strain TM300).